The chain runs to 194 residues: dCTP deaminase (194 aa).

DCTP contacts are provided by residues 110–115 (RSSLAR), D128, 136–138 (VLE), Y171, K178, and Q182. E138 serves as the catalytic Proton donor/acceptor.

Belongs to the dCTP deaminase family. Homotrimer.

It catalyses the reaction dCTP + H2O + H(+) = dUTP + NH4(+). It participates in pyrimidine metabolism; dUMP biosynthesis; dUMP from dCTP (dUTP route): step 1/2. Catalyzes the deamination of dCTP to dUTP. In Pseudoalteromonas translucida (strain TAC 125), this protein is dCTP deaminase.